The chain runs to 219 residues: MENYFVNSEKKHLIQSSISSYESIHKTIGAVPTVIEQSGRGERAFDIYSRLLRERIIFLGSGINDQVSDSLVAQLLFLEAEDPEKDIQIYINSPGGSVTAGMAIYDTMQQISPDVVTICFGVAASMGAFLLSGGAKGKRLALPNSRIMIHQPLGGAQGQAVEIEIQAKEILFLKKTLNSLLAEHTGQPLEKINEDTERDYFLSPSEAVEYGLIDKVIKK.

The Nucleophile role is filled by Ser125. His150 is an active-site residue.

This sequence belongs to the peptidase S14 family. As to quaternary structure, fourteen ClpP subunits assemble into 2 heptameric rings which stack back to back to give a disk-like structure with a central cavity, resembling the structure of eukaryotic proteasomes.

It localises to the cytoplasm. It catalyses the reaction Hydrolysis of proteins to small peptides in the presence of ATP and magnesium. alpha-casein is the usual test substrate. In the absence of ATP, only oligopeptides shorter than five residues are hydrolyzed (such as succinyl-Leu-Tyr-|-NHMec, and Leu-Tyr-Leu-|-Tyr-Trp, in which cleavage of the -Tyr-|-Leu- and -Tyr-|-Trp bonds also occurs).. In terms of biological role, cleaves peptides in various proteins in a process that requires ATP hydrolysis. Has a chymotrypsin-like activity. Plays a major role in the degradation of misfolded proteins. The chain is ATP-dependent Clp protease proteolytic subunit 4 from Prochlorococcus marinus (strain MIT 9312).